Here is a 509-residue protein sequence, read N- to C-terminus: Proline-rich receptor-like protein kinase PERK15 (509 aa).

The segment at 1 to 44 (MSTDTIPSLSSPPAPEFPSTTPDTATSPAPSQPSIIGPSSLAPF) is disordered. Over 1–61 (MSTDTIPSLS…DGGSRNVALT (61 aa)) the chain is Extracellular. Over residues 18 to 34 (PSTTPDTATSPAPSQPS) the composition is skewed to low complexity. Residues 62-82 (GLITGVVLGATFVLLGVCIFV) form a helical membrane-spanning segment. At 83 to 509 (CFYKRKKRKL…IEPEKNTKDT (427 aa)) the chain is on the cytoplasmic side. T132 is modified (phosphothreonine). The region spanning 143–423 (FSNTNLLGQG…VRAFEGNISI (281 aa)) is the Protein kinase domain. Residues 149–157 (LGQGGFGYV) and K171 contribute to the ATP site. Y216 carries the phosphotyrosine modification. D267 acts as the Proton acceptor in catalysis. S300 is subject to Phosphoserine. Phosphothreonine is present on residues T301 and T306. At Y314 the chain carries Phosphotyrosine. Polar residues predominate over residues 468-499 (FGSSECSGLTSDNGQNPSGSSSITEGQRTTQE). The tract at residues 468–509 (FGSSECSGLTSDNGQNPSGSSSITEGQRTTQEIEPEKNTKDT) is disordered.

The protein belongs to the protein kinase superfamily. Ser/Thr protein kinase family. Mostly expressed in inflorescence bolts, and, to a lower extent, in flower buds and siliques.

It is found in the cell membrane. The enzyme catalyses L-seryl-[protein] + ATP = O-phospho-L-seryl-[protein] + ADP + H(+). The catalysed reaction is L-threonyl-[protein] + ATP = O-phospho-L-threonyl-[protein] + ADP + H(+). The polypeptide is Proline-rich receptor-like protein kinase PERK15 (PERK15) (Arabidopsis thaliana (Mouse-ear cress)).